The primary structure comprises 185 residues: Large ribosomal subunit protein uL22 (185 aa).

The tract at residues 158-185 is disordered; sequence AKPREDEPHKKKISKKKLARAKEKMLRE. Over residues 167 to 176 the composition is skewed to basic residues; sequence KKKISKKKLA.

It belongs to the universal ribosomal protein uL22 family.

This chain is Large ribosomal subunit protein uL22 (RpL17), found in Diaphorina citri (Asian citrus psyllid).